We begin with the raw amino-acid sequence, 313 residues long: uncharacterized protein (313 aa).

This is an uncharacterized protein from Archaeoglobus fulgidus (strain ATCC 49558 / DSM 4304 / JCM 9628 / NBRC 100126 / VC-16).